The sequence spans 100 residues: Large ribosomal subunit protein eL30 (100 aa).

It belongs to the eukaryotic ribosomal protein eL30 family.

The protein is Large ribosomal subunit protein eL30 of Methanococcus maripaludis (strain DSM 14266 / JCM 13030 / NBRC 101832 / S2 / LL).